A 222-amino-acid polypeptide reads, in one-letter code: dTTP/UTP pyrophosphatase (222 aa).

Aspartate 83 functions as the Proton acceptor in the catalytic mechanism.

This sequence belongs to the Maf family. YhdE subfamily. A divalent metal cation serves as cofactor.

Its subcellular location is the cytoplasm. It catalyses the reaction dTTP + H2O = dTMP + diphosphate + H(+). The catalysed reaction is UTP + H2O = UMP + diphosphate + H(+). Its function is as follows. Nucleoside triphosphate pyrophosphatase that hydrolyzes dTTP and UTP. May have a dual role in cell division arrest and in preventing the incorporation of modified nucleotides into cellular nucleic acids. The protein is dTTP/UTP pyrophosphatase of Desulfitobacterium hafniense (strain Y51).